We begin with the raw amino-acid sequence, 207 residues long: Large ribosomal subunit protein uL4 (207 aa).

The interval 44 to 81 (KRQGTQSAKTRSEVRGGGRKPWRQKGTGRARQGSIRSP) is disordered. Residues 60-71 (GGRKPWRQKGTG) are compositionally biased toward basic residues.

Belongs to the universal ribosomal protein uL4 family. Part of the 50S ribosomal subunit.

In terms of biological role, one of the primary rRNA binding proteins, this protein initially binds near the 5'-end of the 23S rRNA. It is important during the early stages of 50S assembly. It makes multiple contacts with different domains of the 23S rRNA in the assembled 50S subunit and ribosome. Forms part of the polypeptide exit tunnel. The polypeptide is Large ribosomal subunit protein uL4 (Finegoldia magna (strain ATCC 29328 / DSM 20472 / WAL 2508) (Peptostreptococcus magnus)).